The sequence spans 126 residues: Glycine--tRNA ligase beta subunit (126 aa).

This sequence belongs to the class-II aminoacyl-tRNA synthetase family. Tetramer of two alpha and two beta subunits.

The protein resides in the cytoplasm. It catalyses the reaction tRNA(Gly) + glycine + ATP = glycyl-tRNA(Gly) + AMP + diphosphate. This chain is Glycine--tRNA ligase beta subunit (glyS), found in Neisseria gonorrhoeae.